The following is a 246-amino-acid chain: Probable transcriptional regulatory protein YebC (246 aa).

A disordered region spans residues 1–20; it reads MAGHSKWANTRHRKAAQDAK.

Belongs to the TACO1 family.

It localises to the cytoplasm. The polypeptide is Probable transcriptional regulatory protein YebC (Shigella dysenteriae serotype 1 (strain Sd197)).